The sequence spans 421 residues: Phosphoglycerate kinase, cytosolic (421 aa).

(2R)-3-phosphoglycerate is bound by residues Val23, Asp24, Phe25, Asn26, Arg39, Ser61, His62, Gly64, Arg65, Arg135, His172, and Arg173. 2 residues coordinate ADP: Gly218 and Ala219. Gly218 provides a ligand contact to CDP. The AMP site is built by Ala219 and Lys220. Ala219 lines the ATP pocket. Ala219 serves as a coordination point for Mg(2+). Lys220 contacts (2R)-3-phosphoglycerate. Position 223 (Asp223) interacts with CDP. Residue Asp223 participates in Mg(2+) binding. Residues Lys224 and Gly242 each coordinate ADP. Residue Lys224 coordinates AMP. Position 224 (Lys224) interacts with ATP. Gly242 contacts CDP. The AMP site is built by Ala243 and Ala315. ATP is bound by residues Ala243 and Ala315. 2 residues coordinate ADP: Ala315 and Asn339. Residues Gly340 and Phe345 each coordinate CDP. Residues Phe345, Glu346, Asp378, and Ser379 each coordinate ADP. Position 346 (Glu346) interacts with AMP. The ATP site is built by Glu346, Asp378, and Ser379. Residue Asp378 participates in Mg(2+) binding.

Belongs to the phosphoglycerate kinase family. In terms of assembly, monomer. Mg(2+) is required as a cofactor.

It localises to the cytoplasm. The catalysed reaction is (2R)-3-phosphoglycerate + ATP = (2R)-3-phospho-glyceroyl phosphate + ADP. It participates in carbohydrate degradation; glycolysis; pyruvate from D-glyceraldehyde 3-phosphate: step 2/5. The sequence is that of Phosphoglycerate kinase, cytosolic from Trypanosoma brucei brucei.